The primary structure comprises 175 residues: Adenine phosphoribosyltransferase (175 aa).

Belongs to the purine/pyrimidine phosphoribosyltransferase family. In terms of assembly, homodimer.

It localises to the cytoplasm. It carries out the reaction AMP + diphosphate = 5-phospho-alpha-D-ribose 1-diphosphate + adenine. The protein operates within purine metabolism; AMP biosynthesis via salvage pathway; AMP from adenine: step 1/1. Its function is as follows. Catalyzes a salvage reaction resulting in the formation of AMP, that is energically less costly than de novo synthesis. The protein is Adenine phosphoribosyltransferase of Caldicellulosiruptor saccharolyticus (strain ATCC 43494 / DSM 8903 / Tp8T 6331).